The chain runs to 210 residues: MDNDKYLKGTTTVGVVCTDGIVLASEQRATMGHFIASKTAKKVYQIDDLVGMTTAGSVGDAQQLVRLVSVESQLYKMRRDESMTIKGITTLMSNFLSRNRYYPMMVQLLIGGVDKNGPGIYSLDAMGGSIEETRISATGSGSPMAYGVLEDQYRENMTVKEGLDLAIRAIHNATKRDSASGENIDVVVITKEAFKRLDPEEVKSRRALLN.

Residues 1-9 constitute a propeptide, removed in mature form; by autocatalysis; the sequence is MDNDKYLKG. T10 functions as the Nucleophile in the catalytic mechanism.

Belongs to the peptidase T1B family. The 20S proteasome core is composed of 14 alpha and 14 beta subunits that assemble into four stacked heptameric rings, resulting in a barrel-shaped structure. The two inner rings, each composed of seven catalytic beta subunits, are sandwiched by two outer rings, each composed of seven alpha subunits. The catalytic chamber with the active sites is on the inside of the barrel. Has a gated structure, the ends of the cylinder being occluded by the N-termini of the alpha-subunits. Is capped at one or both ends by the proteasome regulatory ATPase, PAN.

It is found in the cytoplasm. The catalysed reaction is Cleavage of peptide bonds with very broad specificity.. The formation of the proteasomal ATPase PAN-20S proteasome complex, via the docking of the C-termini of PAN into the intersubunit pockets in the alpha-rings, triggers opening of the gate for substrate entry. Interconversion between the open-gate and close-gate conformations leads to a dynamic regulation of the 20S proteasome proteolysis activity. Component of the proteasome core, a large protease complex with broad specificity involved in protein degradation. This Methanosarcina thermophila protein is Proteasome subunit beta.